Here is a 223-residue protein sequence, read N- to C-terminus: Deoxyribose-phosphate aldolase (223 aa).

Asp91 (proton donor/acceptor) is an active-site residue. The Schiff-base intermediate with acetaldehyde role is filled by Lys153. The active-site Proton donor/acceptor is Lys182.

The protein belongs to the DeoC/FbaB aldolase family. DeoC type 1 subfamily.

The protein resides in the cytoplasm. The catalysed reaction is 2-deoxy-D-ribose 5-phosphate = D-glyceraldehyde 3-phosphate + acetaldehyde. It participates in carbohydrate degradation; 2-deoxy-D-ribose 1-phosphate degradation; D-glyceraldehyde 3-phosphate and acetaldehyde from 2-deoxy-alpha-D-ribose 1-phosphate: step 2/2. In terms of biological role, catalyzes a reversible aldol reaction between acetaldehyde and D-glyceraldehyde 3-phosphate to generate 2-deoxy-D-ribose 5-phosphate. The sequence is that of Deoxyribose-phosphate aldolase from Yersinia pseudotuberculosis serotype O:1b (strain IP 31758).